The chain runs to 198 residues: MVNYPHKLSSQKRQTSLSQPKNFANRGMSFEKMINATNDYYLSQGLAVIHKKPTPIQIVRVDYPQRSRAKIVEAYFRQASTTDYSGVYNGYYIDFEAKETKQKRAIPMKNFHPHQIQHMEQVLAQQGICFVLLHFSSQQETYLLPALDLIRFYHQDKGQKSMPLGYIREYGYEIKAGAFPQIPYLNVIKEHLLGGKTR.

A disordered region spans residues 1-22; the sequence is MVNYPHKLSSQKRQTSLSQPKN. Residues 11-22 are compositionally biased toward polar residues; sequence QKRQTSLSQPKN. Residues Thr-81, Asp-83, Glu-96, and Gln-115 each contribute to the Mg(2+) site.

Belongs to the RecU family. Mg(2+) serves as cofactor.

It is found in the cytoplasm. It carries out the reaction Endonucleolytic cleavage at a junction such as a reciprocal single-stranded crossover between two homologous DNA duplexes (Holliday junction).. Endonuclease that resolves Holliday junction intermediates in genetic recombination. Cleaves mobile four-strand junctions by introducing symmetrical nicks in paired strands. Promotes annealing of linear ssDNA with homologous dsDNA. Required for DNA repair, homologous recombination and chromosome segregation. The protein is Holliday junction resolvase RecU of Streptococcus pneumoniae (strain Hungary19A-6).